We begin with the raw amino-acid sequence, 229 residues long: Uracil-DNA glycosylase (229 aa).

The active-site Proton acceptor is the Asp71.

The protein belongs to the uracil-DNA glycosylase (UDG) superfamily. UNG family.

The protein resides in the cytoplasm. It carries out the reaction Hydrolyzes single-stranded DNA or mismatched double-stranded DNA and polynucleotides, releasing free uracil.. Functionally, excises uracil residues from the DNA which can arise as a result of misincorporation of dUMP residues by DNA polymerase or due to deamination of cytosine. The sequence is that of Uracil-DNA glycosylase from Campylobacter lari (strain RM2100 / D67 / ATCC BAA-1060).